The chain runs to 234 residues: Glucosamine-6-phosphate deaminase (234 aa).

The active-site Proton acceptor; for enolization step is Asp-62. Asn-128 serves as the catalytic For ring-opening step. His-130 serves as the catalytic Proton acceptor; for ring-opening step. The active-site For ring-opening step is Glu-135.

Belongs to the glucosamine/galactosamine-6-phosphate isomerase family. NagB subfamily.

It carries out the reaction alpha-D-glucosamine 6-phosphate + H2O = beta-D-fructose 6-phosphate + NH4(+). It functions in the pathway amino-sugar metabolism; N-acetylneuraminate degradation; D-fructose 6-phosphate from N-acetylneuraminate: step 5/5. Functionally, catalyzes the reversible isomerization-deamination of glucosamine 6-phosphate (GlcN6P) to form fructose 6-phosphate (Fru6P) and ammonium ion. This Streptococcus suis (strain 98HAH33) protein is Glucosamine-6-phosphate deaminase.